A 204-amino-acid polypeptide reads, in one-letter code: Holliday junction branch migration complex subunit RuvA (204 aa).

Residues 1 to 64 (MIGRLRGTLI…EDAQLLYGFN (64 aa)) form a domain I region. Residues 65 to 143 (TVSERALFRE…GWGAGDLFTP (79 aa)) are domain II. Residues 144–155 (ATDAAPVDSTPV) form a flexible linker region. Residues 156–204 (IAQNAQEEAMSALLALGYKPPQASKAVSQVAKAGMSSEELIREALKSMV) are domain III.

This sequence belongs to the RuvA family. As to quaternary structure, homotetramer. Forms an RuvA(8)-RuvB(12)-Holliday junction (HJ) complex. HJ DNA is sandwiched between 2 RuvA tetramers; dsDNA enters through RuvA and exits via RuvB. An RuvB hexamer assembles on each DNA strand where it exits the tetramer. Each RuvB hexamer is contacted by two RuvA subunits (via domain III) on 2 adjacent RuvB subunits; this complex drives branch migration. In the full resolvosome a probable DNA-RuvA(4)-RuvB(12)-RuvC(2) complex forms which resolves the HJ.

It is found in the cytoplasm. In terms of biological role, the RuvA-RuvB-RuvC complex processes Holliday junction (HJ) DNA during genetic recombination and DNA repair, while the RuvA-RuvB complex plays an important role in the rescue of blocked DNA replication forks via replication fork reversal (RFR). RuvA specifically binds to HJ cruciform DNA, conferring on it an open structure. The RuvB hexamer acts as an ATP-dependent pump, pulling dsDNA into and through the RuvAB complex. HJ branch migration allows RuvC to scan DNA until it finds its consensus sequence, where it cleaves and resolves the cruciform DNA. The polypeptide is Holliday junction branch migration complex subunit RuvA (Vibrio cholerae serotype O1 (strain ATCC 39541 / Classical Ogawa 395 / O395)).